A 298-amino-acid chain; its full sequence is UDP-N-acetylenolpyruvoylglucosamine reductase (298 aa).

The 166-residue stretch at 26 to 191 (KTGGEAEYLA…LSATFSLTPG (166 aa)) folds into the FAD-binding PCMH-type domain. R170 is a catalytic residue. Residue S220 is the Proton donor of the active site. E290 is an active-site residue.

This sequence belongs to the MurB family. The cofactor is FAD.

It localises to the cytoplasm. The catalysed reaction is UDP-N-acetyl-alpha-D-muramate + NADP(+) = UDP-N-acetyl-3-O-(1-carboxyvinyl)-alpha-D-glucosamine + NADPH + H(+). It participates in cell wall biogenesis; peptidoglycan biosynthesis. In terms of biological role, cell wall formation. This chain is UDP-N-acetylenolpyruvoylglucosamine reductase, found in Lactobacillus helveticus (strain DPC 4571).